Consider the following 345-residue polypeptide: Tryptophan--tRNA ligase (345 aa).

ATP contacts are provided by residues 21-23 (QPT) and 30-31 (GN). Positions 22–31 (PTADSYHLGN) match the 'HIGH' region motif. D147 contacts L-tryptophan. ATP-binding positions include 159 to 161 (GED), I198, and 207 to 211 (KMSKS). Positions 207 to 211 (KMSKS) match the 'KMSKS' region motif.

It belongs to the class-I aminoacyl-tRNA synthetase family. In terms of assembly, homodimer.

It localises to the cytoplasm. It catalyses the reaction tRNA(Trp) + L-tryptophan + ATP = L-tryptophyl-tRNA(Trp) + AMP + diphosphate + H(+). Functionally, catalyzes the attachment of tryptophan to tRNA(Trp). In Corynebacterium glutamicum (strain ATCC 13032 / DSM 20300 / JCM 1318 / BCRC 11384 / CCUG 27702 / LMG 3730 / NBRC 12168 / NCIMB 10025 / NRRL B-2784 / 534), this protein is Tryptophan--tRNA ligase.